A 263-amino-acid chain; its full sequence is Large ribosomal subunit protein uL29m (263 aa).

Disordered stretches follow at residues 51–92 and 208–263; these read ARVT…EELP and PEID…APRV. Over residues 53-66 the composition is skewed to basic and acidic residues; that stretch reads VTRDNSKQRGESAL. The segment covering 214-223 has biased composition (polar residues); sequence NPENPYTPST. A compositionally biased stretch (low complexity) spans 233-245; the sequence is GAEASETQSTTTE. Polar residues predominate over residues 246 to 257; it reads IDPTTIPSSKSQ.

It belongs to the universal ribosomal protein uL29 family. In terms of assembly, component of the mitochondrial large ribosomal subunit (mt-LSU). Mature N.crassa 74S mitochondrial ribosomes consist of a small (37S) and a large (54S) subunit. The 37S small subunit contains a 16S ribosomal RNA (16S mt-rRNA) and 32 different proteins. The 54S large subunit contains a 23S rRNA (23S mt-rRNA) and 42 different proteins.

The protein resides in the mitochondrion. In terms of biological role, component of the mitochondrial ribosome (mitoribosome), a dedicated translation machinery responsible for the synthesis of mitochondrial genome-encoded proteins, including at least some of the essential transmembrane subunits of the mitochondrial respiratory chain. The mitoribosomes are attached to the mitochondrial inner membrane and translation products are cotranslationally integrated into the membrane. The chain is Large ribosomal subunit protein uL29m (mrpl4) from Neurospora crassa (strain ATCC 24698 / 74-OR23-1A / CBS 708.71 / DSM 1257 / FGSC 987).